Reading from the N-terminus, the 181-residue chain is MLNEPLPSSMEDNPQFKEETSLQKFRRRLKEEPLIPLGCAATCYALYRAYRSMKAGDSVEMNKMFRARIYAQFFTLVAVVAGGMYYKTERQQRREFEKMVEQRKAQEKRDAWLRELEIRDKEDKDWRERHAAIEAAAKEAGKRPAPKKLPEQDAARSAIEPADERSIGVLSAVRDLWMQQK.

The 92-residue stretch at 6-97 (LPSSMEDNPQ…TERQQRREFE (92 aa)) folds into the HIG1 domain. A run of 2 helical transmembrane segments spans residues 33 to 49 (PLIP…LYRA) and 69 to 86 (IYAQ…GMYY). Positions 134–154 (EAAAKEAGKRPAPKKLPEQDA) are enriched in basic and acidic residues. The disordered stretch occupies residues 134-161 (EAAAKEAGKRPAPKKLPEQDAARSAIEP).

This sequence belongs to the RCF1 family. In terms of assembly, associates with the respiratory chain complex III/complex IV supercomplex.

Its subcellular location is the mitochondrion membrane. Cytochrome c oxidase subunit which plays a role in assembly of respiratory supercomplexes. The chain is Respiratory supercomplex factor 1, mitochondrial (rcf1) from Aspergillus fumigatus (strain CBS 144.89 / FGSC A1163 / CEA10) (Neosartorya fumigata).